A 358-amino-acid chain; its full sequence is 3-dehydroquinate synthase (358 aa).

Residues 102–106, 126–127, Lys-138, and Lys-147 each bind NAD(+); these read GVVGD and TT. Residues Glu-180, His-243, and His-260 each contribute to the Zn(2+) site.

It belongs to the sugar phosphate cyclases superfamily. Dehydroquinate synthase family. Co(2+) is required as a cofactor. Zn(2+) serves as cofactor. It depends on NAD(+) as a cofactor.

The protein resides in the cytoplasm. It carries out the reaction 7-phospho-2-dehydro-3-deoxy-D-arabino-heptonate = 3-dehydroquinate + phosphate. Its pathway is metabolic intermediate biosynthesis; chorismate biosynthesis; chorismate from D-erythrose 4-phosphate and phosphoenolpyruvate: step 2/7. Catalyzes the conversion of 3-deoxy-D-arabino-heptulosonate 7-phosphate (DAHP) to dehydroquinate (DHQ). This is 3-dehydroquinate synthase from Shouchella clausii (strain KSM-K16) (Alkalihalobacillus clausii).